A 122-amino-acid polypeptide reads, in one-letter code: Large ribosomal subunit protein uL14 (122 aa).

The protein belongs to the universal ribosomal protein uL14 family. In terms of assembly, part of the 50S ribosomal subunit. Forms a cluster with proteins L3 and L19. In the 70S ribosome, L14 and L19 interact and together make contacts with the 16S rRNA in bridges B5 and B8.

In terms of biological role, binds to 23S rRNA. Forms part of two intersubunit bridges in the 70S ribosome. The polypeptide is Large ribosomal subunit protein uL14 (Buchnera aphidicola subsp. Schizaphis graminum (strain Sg)).